Here is a 512-residue protein sequence, read N- to C-terminus: MNKHVEAEWRFPAKTAWAIFAAMIFGNFMAILDIQIVASSLNEVQAGMSASRYEVTWVQTVYLIAEIIAIPMSSIVSRVLSTRVYYTMCAIGFTVSSLLCALSWNLESLLVFRGIQGFMGGGMIPTSMTALYLLFPEPKRSLPLVMFGMISTLGPAIGPTIGGWLTNNFSWHWMFLINIIPGIIIATVIYSGPNIDRANYSLIKSMDWFSLVGMAMFLGGLEYFLDEGARHDWLADTGVRIAFMVCVVGGMIFFSRSFTQPKPLLDLSVFKNKNFTLSAITTFVIGMALYGLGYMIPVFLGQVREMNSSQIGHVMMVTGIVMFCFAPFLAWLIPNFDTRKTVFVGMILAGFGVWLNSHLSIHSDYDFMFWPQIYRGIGLMICLIVVSHLAMSTLPLSKVADASGIYNLMRNIGGAVGLALINSSLDWLTAMHVTQINQSMTPQNWIFTERLDQLTAQYQEVGTNAQQIALSVIYRDIHFQALTSSFNDLLRMLAIIMFVTAFLTIFMDRGKK.

A run of 14 helical transmembrane segments spans residues 17-37, 55-75, 84-104, 115-135, 144-164, 169-189, 205-225, 234-254, 280-300, 314-334, 341-361, 376-396, 412-432, and 486-506; these read WAIF…IQIV, VTWV…MSSI, VYYT…ALSW, IQGF…YLLF, LVMF…IGGW, FSWH…ATVI, SMDW…EYFL, LADT…MIFF, ITTF…PVFL, VMMV…WLIP, TVFV…HLSI, GIGL…TLPL, IGGA…TAMH, and FNDL…LTIF.

Belongs to the major facilitator superfamily. EmrB family.

It is found in the cell inner membrane. Functionally, probably part of an efflux pump system that contributes to adaptation to osmotic stress and resistance to colistin. The protein is Colistin resistance protein EmrB of Acinetobacter baumannii (strain ATCC 17978 / DSM 105126 / CIP 53.77 / LMG 1025 / NCDC KC755 / 5377).